The following is a 63-amino-acid chain: Phylloseptin-Az1 (63 aa).

Residues 1 to 19 (LKKSLFLVVFLGLATLSIC) form the signal peptide. The propeptide occupies 20–41 (EEEKRETEEEEYNQGEDDKSEE). At Phe62 the chain carries Phenylalanine amide.

Expressed by the skin glands.

The protein resides in the secreted. Its function is as follows. Has antimicrobial activity. This chain is Phylloseptin-Az1, found in Pithecopus azureus (Orange-legged monkey tree frog).